The sequence spans 347 residues: Melatonin receptor type 1B-B (347 aa).

The Extracellular portion of the chain corresponds to 1–36; the sequence is MPENIAFLTNSTDLGHVGRALGSSARPAWAIAVLAS. N-linked (GlcNAc...) asparagine glycosylation is present at asparagine 10. Residues 37–57 form a helical membrane-spanning segment; that stretch reads VLIFTTVVDVLGNLLVIISVF. Over 58–72 the chain is Cytoplasmic; sequence RNRKLRNAGNVFVVS. The chain crosses the membrane as a helical span at residues 73–93; it reads LAFADLVVAFYPYPLVLYAIF. Residues 94–105 lie on the Extracellular side of the membrane; that stretch reads HDGWSLGETQCK. Cysteine 104 and cysteine 181 are disulfide-bonded. The helical transmembrane segment at 106-126 threads the bilayer; that stretch reads ISGFLMGLSVIGSVFNITGIA. The Cytoplasmic portion of the chain corresponds to 127 to 148; sequence INRYCYICHSFAYGRLYSFRNT. Residues 149–169 form a helical membrane-spanning segment; sequence LLLVALIWALTVLAILPNFFV. The Extracellular portion of the chain corresponds to 170–191; sequence GSLSYDPRVYSCTFTQTASSSY. A helical membrane pass occupies residues 192-212; sequence TVVVVVVHFLVPIAVVTFCYL. Residues 213-244 lie on the Cytoplasmic side of the membrane; it reads RIWVLVIQVRRKVKSEERSRVRPSDLRNFVTM. Residues 245 to 265 form a helical membrane-spanning segment; that stretch reads FVVFVLFAICWAPLNLIGLVV. Over 266-278 the chain is Extracellular; sequence AINPEVMAPRVPE. A helical transmembrane segment spans residues 279 to 299; that stretch reads WLFVVSYFMAYFNSCLNAIIY. At 300-347 the chain is on the cytoplasmic side; that stretch reads GLLNRNFRKEYVRIMTAVWIPRRFVTETSRAATDGMRSKPSPAINNNE.

It belongs to the G-protein coupled receptor 1 family.

The protein resides in the cell membrane. Its function is as follows. High affinity receptor for melatonin. The activity of this receptor is mediated by pertussis toxin sensitive G proteins that inhibits adenylate cyclase activity. This Danio rerio (Zebrafish) protein is Melatonin receptor type 1B-B (mtnr1bb).